We begin with the raw amino-acid sequence, 920 residues long: 2-oxoglutarate dehydrogenase E1 component (920 aa).

It belongs to the alpha-ketoglutarate dehydrogenase family. As to quaternary structure, homodimer. Part of the 2-oxoglutarate dehydrogenase (OGDH) complex composed of E1 (2-oxoglutarate dehydrogenase), E2 (dihydrolipoamide succinyltransferase) and E3 (dihydrolipoamide dehydrogenase); the complex contains multiple copies of the three enzymatic components (E1, E2 and E3). The cofactor is thiamine diphosphate.

The catalysed reaction is N(6)-[(R)-lipoyl]-L-lysyl-[protein] + 2-oxoglutarate + H(+) = N(6)-[(R)-S(8)-succinyldihydrolipoyl]-L-lysyl-[protein] + CO2. E1 component of the 2-oxoglutarate dehydrogenase (OGDH) complex which catalyzes the decarboxylation of 2-oxoglutarate, the first step in the conversion of 2-oxoglutarate to succinyl-CoA and CO(2). The polypeptide is 2-oxoglutarate dehydrogenase E1 component (Leptospira interrogans serogroup Icterohaemorrhagiae serovar copenhageni (strain Fiocruz L1-130)).